Consider the following 322-residue polypeptide: Homoserine kinase (322 aa).

107–117 is an ATP binding site; the sequence is PLSSGMGGSAA.

It belongs to the GHMP kinase family. Homoserine kinase subfamily.

It is found in the cytoplasm. It catalyses the reaction L-homoserine + ATP = O-phospho-L-homoserine + ADP + H(+). The protein operates within amino-acid biosynthesis; L-threonine biosynthesis; L-threonine from L-aspartate: step 4/5. Functionally, catalyzes the ATP-dependent phosphorylation of L-homoserine to L-homoserine phosphate. The chain is Homoserine kinase from Xylella fastidiosa (strain 9a5c).